The sequence spans 198 residues: MNREEQLGILESLLFAAGDAGLSTEQLTEVMEITHIEALNLLELLSERYNGSADRGLILLELAGTFQLATKKAHADYLRKLVEVPSNTVLSQASLETLAIIAYRQPVTRMEVDEVRGVQTDGPIRTLVAKGLVTDKGRVDGAGRAKLYVTTSEFLDAFGLNSLEDLPKLADPAAEEPDQNEMDLFFDRFNQSKEQEEE.

The tract at residues 169–198 (LADPAAEEPDQNEMDLFFDRFNQSKEQEEE) is disordered.

This sequence belongs to the ScpB family. In terms of assembly, homodimer. Homodimerization may be required to stabilize the binding of ScpA to the Smc head domains. Component of a cohesin-like complex composed of ScpA, ScpB and the Smc homodimer, in which ScpA and ScpB bind to the head domain of Smc. The presence of the three proteins is required for the association of the complex with DNA.

The protein localises to the cytoplasm. In terms of biological role, participates in chromosomal partition during cell division. May act via the formation of a condensin-like complex containing Smc and ScpA that pull DNA away from mid-cell into both cell halves. The polypeptide is Segregation and condensation protein B (Listeria monocytogenes serotype 4a (strain HCC23)).